We begin with the raw amino-acid sequence, 145 residues long: 3-hydroxyacyl-[acyl-carrier-protein] dehydratase FabZ (145 aa).

His-49 is a catalytic residue.

This sequence belongs to the thioester dehydratase family. FabZ subfamily.

The protein resides in the cytoplasm. The catalysed reaction is a (3R)-hydroxyacyl-[ACP] = a (2E)-enoyl-[ACP] + H2O. Its function is as follows. Involved in unsaturated fatty acids biosynthesis. Catalyzes the dehydration of short chain beta-hydroxyacyl-ACPs and long chain saturated and unsaturated beta-hydroxyacyl-ACPs. The protein is 3-hydroxyacyl-[acyl-carrier-protein] dehydratase FabZ of Ehrlichia ruminantium (strain Welgevonden).